Consider the following 328-residue polypeptide: G2/mitotic-specific cyclin-2 (328 aa).

It belongs to the cyclin family. Cyclin AB subfamily. Interacts with the CDC2 protein kinase to form a serine/threonine kinase holoenzyme complex also known as maturation promoting factor (MPF). The cyclin subunit imparts substrate specificity to the complex. Only expressed in organs with dividing cells.

In terms of biological role, essential for the control of the cell cycle at the G2/M (mitosis) transition. The chain is G2/mitotic-specific cyclin-2 from Medicago sativa (Alfalfa).